The sequence spans 237 residues: Histone H1E (237 aa).

The span at 1–21 (MSDPAQEVEAPVEAAPVASSP) shows a compositional bias: low complexity. 2 disordered regions span residues 1–56 (MSDP…PVSE) and 109–237 (LQAK…KKAK). The span at 26–42 (EKAPKAPKAEKPKSDKP) shows a compositional bias: basic and acidic residues. One can recognise an H15 domain in the interval 50–124 (THPPVSEMVV…GASGSFKLPP (75 aa)). Positions 182 to 195 (AKPAAKKAAAPKPK) are enriched in low complexity. A compositionally biased stretch (basic and acidic residues) spans 200-209 (PKKEVKPKKE). Positions 210–237 (AKPKKAAAKPAKKPAAKPAKKPAAKKAK) are enriched in basic residues.

It belongs to the histone H1/H5 family.

The protein resides in the nucleus. It is found in the chromosome. Its function is as follows. Histones H1 are necessary for the condensation of nucleosome chains into higher-order structures. This Chironomus tentans (Midge) protein is Histone H1E.